We begin with the raw amino-acid sequence, 825 residues long: NT-3 growth factor receptor (825 aa).

The N-terminal stretch at methionine 1–alanine 31 is a signal peptide. Disulfide bonds link cysteine 32-cysteine 38 and cysteine 36-cysteine 45. Residues cysteine 32–threonine 429 are Extracellular-facing. Asparagine 68, asparagine 72, and asparagine 79 each carry an N-linked (GlcNAc...) asparagine glycan. LRR repeat units lie at residues glycine 104 to lysine 125 and histidine 128 to threonine 149. Residues asparagine 133 and asparagine 163 are each glycosylated (N-linked (GlcNAc...) asparagine). The 50-residue stretch at asparagine 160–leucine 209 folds into the LRRCT domain. 2 cysteine pairs are disulfide-bonded: cysteine 164–cysteine 189 and cysteine 166–cysteine 207. Asparagine 203, asparagine 218, asparagine 232, asparagine 259, asparagine 267, asparagine 272, and asparagine 294 each carry an N-linked (GlcNAc...) asparagine glycan. Ig-like C2-type domains follow at residues proline 210 to threonine 300 and serine 309 to asparagine 382. A disulfide bridge links cysteine 231 with cysteine 284. Cysteines 320 and 362 form a disulfide. 2 N-linked (GlcNAc...) asparagine glycosylation sites follow: asparagine 375 and asparagine 388. The helical transmembrane segment at phenylalanine 430–isoleucine 453 threads the bilayer. The Cytoplasmic segment spans residues asparagine 454–glycine 825. Phosphoserine is present on serine 493. Phosphotyrosine is present on tyrosine 516. The Protein kinase domain maps to isoleucine 538–glycine 825. ATP contacts are provided by residues leucine 544–valine 552 and lysine 572. Aspartate 679 acts as the Proton acceptor in catalysis. A phosphotyrosine; by autocatalysis mark is found at tyrosine 705, tyrosine 709, and tyrosine 710.

The protein belongs to the protein kinase superfamily. Tyr protein kinase family. Insulin receptor subfamily. In terms of assembly, exists in a dynamic equilibrium between monomeric (low affinity) and dimeric (high affinity) structures. Binds SH2B2. Interacts with SQSTM1 and KIDINS220. Interacts with PTPRS. Interacts with MAPK8IP3/JIP3. In terms of processing, ligand-mediated auto-phosphorylation. In terms of tissue distribution, isoform 2 expression is restricted to specific areas in adult brain. Isoform 3 transcripts are readily detected early during embryogenesis and are expressed predominantly in adult brain and gonads.

It is found in the membrane. It catalyses the reaction L-tyrosyl-[protein] + ATP = O-phospho-L-tyrosyl-[protein] + ADP + H(+). Receptor tyrosine kinase involved in nervous system and probably heart development. Upon binding of its ligand NTF3/neurotrophin-3, NTRK3 autophosphorylates and activates different signaling pathways, including the phosphatidylinositol 3-kinase/AKT and the MAPK pathways, that control cell survival and differentiation. The chain is NT-3 growth factor receptor (Ntrk3) from Mus musculus (Mouse).